The sequence spans 244 residues: Probable phosphatase CA_C0509 (244 aa).

Zn(2+)-binding residues include His-8, His-10, His-16, His-41, Glu-74, His-102, His-132, Asp-193, and His-195.

Belongs to the PHP family. Zn(2+) serves as cofactor.

In Clostridium acetobutylicum (strain ATCC 824 / DSM 792 / JCM 1419 / IAM 19013 / LMG 5710 / NBRC 13948 / NRRL B-527 / VKM B-1787 / 2291 / W), this protein is Probable phosphatase CA_C0509.